The primary structure comprises 792 residues: Ribonucleoside-diphosphate reductase large subunit (792 aa).

The ATP-cone domain maps to 1–92 (MHVIKRDGRQ…VSNLHKETKK (92 aa)). ATP-binding positions include 5–6 (KR), 11–17 (ERVMFDK), Thr-53, and Asp-57. An N6-acetyllysine modification is found at Lys-17. GDP is bound by residues Ser-202 and Ser-217. A disulfide bridge connects residues Cys-218 and Cys-444. Residues 226–228 (DSI), Lys-243, Arg-256, and 263–264 (AG) contribute to the dTTP site. The residue at position 376 (Lys-376) is an N6-acetyllysine. Asn-427 lines the GDP pocket. The Proton acceptor role is filled by Asn-427. Cys-429 (cysteine radical intermediate) is an active-site residue. Residues Glu-431 and 604–607 (TAST) each bind GDP. Residue Glu-431 is the Proton acceptor of the active site. Position 751 is a phosphothreonine (Thr-751).

Belongs to the ribonucleoside diphosphate reductase large chain family. As to quaternary structure, heterodimer of a large and a small subunit. Heterodimer with small subunit RRM2 or RRM2B. The heterodimer with RRM2 has higher catalytic activity than the heterodimer with RRM2B. Interacts with AHCYL1 which inhibits its activity.

It localises to the cytoplasm. The catalysed reaction is a 2'-deoxyribonucleoside 5'-diphosphate + [thioredoxin]-disulfide + H2O = a ribonucleoside 5'-diphosphate + [thioredoxin]-dithiol. With respect to regulation, under complex allosteric control mediated by deoxynucleoside triphosphates and ATP binding to separate specificity and activation sites on the M1 subunit. The type of nucleotide bound at the specificity site determines substrate preference. It seems probable that ATP makes the enzyme reduce CDP and UDP, dGTP favors ADP reduction and dTTP favors GDP reduction. Stimulated by ATP and inhibited by dATP binding to the activity site, the dATP inhibition is mediated by AHCYL1 which stabilizes dATP in the site. Functionally, provides the precursors necessary for DNA synthesis. Catalyzes the biosynthesis of deoxyribonucleotides from the corresponding ribonucleotides. The chain is Ribonucleoside-diphosphate reductase large subunit (RRM1) from Homo sapiens (Human).